Reading from the N-terminus, the 318-residue chain is MLHLIYISIIVVLIIILISYTRKPQYFRITAPRSVALFHGIHPLNPKNYKTFSEEFETILNNAIEDGDFKGQLTEPCSYALRGGKYIRPIILMEIVRACQLQHSFGAPIYPAEAALAVEYFHVASLIIDDMPSFDNDVKRRNKDTVWARFGVAKAQMSALALTMQGFQNICRQVDWIKENCPRFPDPNQLGALLCTFVSHSLNSAGSGQLVDTPEKTIPFFKIAFIMGWVLGTGTIEDIGAIERAAHCFGNAFQLADDIKDHDTDTGRNYAKIHGKRKTFDVVAQSLQECKKILHEKKIYTSIWNEIFQKVINVALGT.

The helical transmembrane segment at 1-21 threads the bilayer; sequence MLHLIYISIIVVLIIILISYT. Positions 85, 88, and 122 each coordinate isopentenyl diphosphate. Positions 129 and 135 each coordinate Mg(2+). R140 contacts dimethylallyl diphosphate. Position 141 (R141) interacts with isopentenyl diphosphate. Dimethylallyl diphosphate-binding residues include K216, T217, and Q254.

This sequence belongs to the FPP/GGPP synthase family. Asfivirus trans-prenyltransferase subfamily. Mg(2+) is required as a cofactor.

The protein resides in the host endoplasmic reticulum. It is found in the host membrane. The catalysed reaction is isopentenyl diphosphate + dimethylallyl diphosphate = (2E)-geranyl diphosphate + diphosphate. It carries out the reaction isopentenyl diphosphate + (2E)-geranyl diphosphate = (2E,6E)-farnesyl diphosphate + diphosphate. It catalyses the reaction isopentenyl diphosphate + (2E,6E)-farnesyl diphosphate = (2E,6E,10E)-geranylgeranyl diphosphate + diphosphate. The enzyme catalyses isopentenyl diphosphate + (2E,6E,10E)-geranylgeranyl diphosphate = (2E,6E,10E,14E)-geranylfarnesyl diphosphate + diphosphate. It participates in isoprenoid biosynthesis; farnesyl diphosphate biosynthesis; farnesyl diphosphate from geranyl diphosphate and isopentenyl diphosphate: step 1/1. It functions in the pathway isoprenoid biosynthesis; geranyl diphosphate biosynthesis; geranyl diphosphate from dimethylallyl diphosphate and isopentenyl diphosphate: step 1/1. Its pathway is isoprenoid biosynthesis; geranylgeranyl diphosphate biosynthesis; geranylgeranyl diphosphate from farnesyl diphosphate and isopentenyl diphosphate: step 1/1. In terms of biological role, trans-prenyltransferase that catalyzes the sequential condensation of isopentenyl diphosphate (IPP) with different allylic diphosphates, such as dimethylallyl diphosphate (DMAPP), geranyl diphosphate (GPP), farnesyl diphosphate (FPP) and geranylgeranyl diphosphate (GGPP), farnesyl diphosphate being the best allylic substrate. This Ornithodoros (relapsing fever ticks) protein is Trans-prenyltransferase.